We begin with the raw amino-acid sequence, 467 residues long: Tubulointerstitial nephritis antigen-like (467 aa).

A signal peptide spans 1 to 21 (MWRCPLGLLLLLPLAGHLALG). An SMB domain is found at 50 to 98 (EQDLCCRGRADDCALPYLGAICYCDLFCNRTVSDCCPDFWDFCLGVPPP). Intrachain disulfides connect Cys-54–Cys-73, Cys-71–Cys-73, Cys-71–Cys-85, Cys-77–Cys-84, and Cys-85–Cys-92. The N-linked (GlcNAc...) asparagine glycan is linked to Asn-78. N-linked (GlcNAc...) asparagine glycosylation occurs at Asn-161.

It belongs to the peptidase C1 family. Post-translationally, glycosylated. As to expression, highly expressed in aorta, heart, placenta, kidney and a colorectal adenocarcinoma cell line. Moderately expressed in skeletal muscle, pancreas, lung, lymph nodes, adrenal gland, bone marrow and thyroid. Weakly expressed in colon, small intestine, ovary, spleen, testis and prostate. Predominantly found in vascular smooth muscle cells, but also in cardiac and skeletal muscle cells as well as kidney.

It localises to the secreted. Functionally, may be implicated in the adrenocortical zonation and in mechanisms for repressing the CYP11B1 gene expression in adrenocortical cells. This is a non catalytic peptidase C1 family protein. The sequence is that of Tubulointerstitial nephritis antigen-like (TINAGL1) from Homo sapiens (Human).